The following is a 256-amino-acid chain: MNDLLTIGDKTFRSRLFTGTGKFPNASVMQKALIESGSELSTMALKRVEVNNPEDNILKPIVDAGINLLPNTSGAKNAREAIFAAQLAREALGTNWLKLEIHPDPKYLMPDPIETLTAAEELVKQGFIVLPYCHADPVLCKRLEEVGCAAVMPLGAPIGSNKGIVSRDFLEIIIDQARVPVVVDAGIGAPSHAALAMELGADAVLVNTAIAAARNPIAMATAFKLAVQSGRLAYENGLAAVNTQAVASSPLTAFLD.

Catalysis depends on Lys-98, which acts as the Schiff-base intermediate with DXP. Residues Gly-159, 185 to 186 (AG), and 207 to 208 (NT) each bind 1-deoxy-D-xylulose 5-phosphate.

Belongs to the ThiG family. Homotetramer. Forms heterodimers with either ThiH or ThiS.

The protein localises to the cytoplasm. It carries out the reaction [ThiS sulfur-carrier protein]-C-terminal-Gly-aminoethanethioate + 2-iminoacetate + 1-deoxy-D-xylulose 5-phosphate = [ThiS sulfur-carrier protein]-C-terminal Gly-Gly + 2-[(2R,5Z)-2-carboxy-4-methylthiazol-5(2H)-ylidene]ethyl phosphate + 2 H2O + H(+). Its pathway is cofactor biosynthesis; thiamine diphosphate biosynthesis. Its function is as follows. Catalyzes the rearrangement of 1-deoxy-D-xylulose 5-phosphate (DXP) to produce the thiazole phosphate moiety of thiamine. Sulfur is provided by the thiocarboxylate moiety of the carrier protein ThiS. In vitro, sulfur can be provided by H(2)S. In Aliivibrio fischeri (strain MJ11) (Vibrio fischeri), this protein is Thiazole synthase.